Reading from the N-terminus, the 307-residue chain is UDP-N-acetylenolpyruvoylglucosamine reductase (307 aa).

Residues 33–198 (KVGGPVDILV…LEAILKLSLG (166 aa)) form the FAD-binding PCMH-type domain. Arginine 177 is a catalytic residue. Serine 227 serves as the catalytic Proton donor. Glutamate 297 is a catalytic residue.

Belongs to the MurB family. It depends on FAD as a cofactor.

Its subcellular location is the cytoplasm. It carries out the reaction UDP-N-acetyl-alpha-D-muramate + NADP(+) = UDP-N-acetyl-3-O-(1-carboxyvinyl)-alpha-D-glucosamine + NADPH + H(+). The protein operates within cell wall biogenesis; peptidoglycan biosynthesis. Functionally, cell wall formation. The polypeptide is UDP-N-acetylenolpyruvoylglucosamine reductase (Clostridium tetani (strain Massachusetts / E88)).